We begin with the raw amino-acid sequence, 59 residues long: U-scoloptoxin(23)-Er2a (59 aa).

It belongs to the scoloptoxin-23 family. In terms of processing, contains 1 disulfide bond. In terms of tissue distribution, expressed by the venom gland.

The protein localises to the secreted. The polypeptide is U-scoloptoxin(23)-Er2a (Ethmostigmus rubripes (Giant centipede)).